The sequence spans 452 residues: MGKYFGTDGVRGEANVELTPEMAFKLGRFGGYVLSQHELETPKVYVGRDTRISGQMLASSLISGLLSVGIEVYDLGVIATPGVAYLVKKDGASAGVMISASHNPALDNGIKFFGGDGYKLEDEKELEIEALIDAKEDTLPRPSAQGLGMLHDYIEGVRKYQAFLKTTAEGDFEGYNVVLDTANGASYTSARAVFADLKANLTVIGENPDGLNINVKVGSTHPEAMAKKVVETGSDLGLAFDGDADRLIAVDENGEIVDGDKIMFIVGKYLLEQGKLAQDTLVTTVMSNLGFHLALEEAGINSVITAVGDRYVVEEMKKNNYNFGGEQSGHMIFLDYNTTGDGQLSAIQLLKVMRETGKTLSELASEVTIYPQKLVNVRVKDNAAKKSAMDVPAIQKVISEMETSMNGKGRILVRPSGTEPLLRVMAEAPTHEQVDHVVDTIVEVVEEEIGVK.

Ser101 functions as the Phosphoserine intermediate in the catalytic mechanism. 4 residues coordinate Mg(2+): Ser101, Asp241, Asp243, and Asp245. Position 101 is a phosphoserine (Ser101).

The protein belongs to the phosphohexose mutase family. Requires Mg(2+) as cofactor. Activated by phosphorylation.

It catalyses the reaction alpha-D-glucosamine 1-phosphate = D-glucosamine 6-phosphate. Catalyzes the conversion of glucosamine-6-phosphate to glucosamine-1-phosphate. This chain is Phosphoglucosamine mutase, found in Lactococcus lactis subsp. cremoris (strain MG1363).